A 398-amino-acid chain; its full sequence is Phosphoglycerate kinase (398 aa).

Substrate is bound by residues 23–25 (DLN), Arg38, 61–64 (HFGR), Arg120, and Arg153. Residues Lys203, Glu325, and 355–358 (GGDT) contribute to the ATP site.

Belongs to the phosphoglycerate kinase family. As to quaternary structure, monomer.

The protein localises to the cytoplasm. The catalysed reaction is (2R)-3-phosphoglycerate + ATP = (2R)-3-phospho-glyceroyl phosphate + ADP. The protein operates within carbohydrate degradation; glycolysis; pyruvate from D-glyceraldehyde 3-phosphate: step 2/5. The chain is Phosphoglycerate kinase from Sphingopyxis alaskensis (strain DSM 13593 / LMG 18877 / RB2256) (Sphingomonas alaskensis).